The sequence spans 613 residues: MTTLDSNNNTGGVITYIGSSGSSPNRTSPESLYSDSSNGSFQSLTQGCPTYFPPSPTGSLTQDPARSFGSIPPSLGDDGSPSSSSSSSSSSSSSFYNGSPPGGLQVALEDSNRVSPSKSTSNITKLNGMVLLCKVCGDVASGFHYGVHACEGCKGFFRRSIQQNIQYKRCLKNENCSIVRINRNRCQQCRFKKCLSVGMSRDAVRFGRIPKREKQRMLAEMQSAMNLANNQLSSQCPLETPPTQHPTPGPMGPSPPPAPAPSPLVGFSQFPQQLTPPRSPSPEPTVEDVISQVARAHREIFTYAHDKLGTSPGNFNANHASGNRPATTPHRWESQGCPPANDNIMAAQRHNEALNSLRQASSSYPPPWPPGAAHHSCHQPNSNGHRLCPTHVYPAPEGEAPVNSPRQGNSKNILLACPMNMYPHGRSGRTVQEIWEDFSMSFTPAVREVVEFAKHIPGFRDLSQHDQVTLLKAGTFEVLMVRFASLFNVKDQTVMFLSRTTYSLQELGAMGMGDLLNAMFDFSEKLNSLALTEEELGLFTAVVLVSADRSGMENSASVEQLQETLLRALRALVLKNRPSETSRFTKLLLKLPDLRTLNNMHSEKLLSFRVDAQ.

Polar residues predominate over residues 1–48 (MTTLDSNNNTGGVITYIGSSGSSPNRTSPESLYSDSSNGSFQSLTQGC). Residues 1–70 (MTTLDSNNNT…TQDPARSFGS (70 aa)) are required for phosphorylation by CSNK1E and cytoplasmic localization. The tract at residues 1–102 (MTTLDSNNNT…SSFYNGSPPG (102 aa)) is disordered. The segment at 1 to 129 (MTTLDSNNNT…TSNITKLNGM (129 aa)) is modulating. The interval 49–285 (PTYFPPSPTG…PPRSPSPEPT (237 aa)) is crucial for activation of GJA1. Phosphoserine; by GSK3-beta is present on residues S55 and S59. Over residues 69 to 102 (GSIPPSLGDDGSPSSSSSSSSSSSSSFYNGSPPG) the composition is skewed to low complexity. A DNA-binding region (nuclear receptor) is located at residues 130–206 (VLLCKVCGDV…VGMSRDAVRF (77 aa)). NR C4-type zinc fingers lie at residues 133 to 153 (CKVCGDVASGFHYGVHACEGC) and 170 to 194 (CLKNENCSIVRINRNRCQQCRFKKC). K192 and K193 each carry N6-acetyllysine; by KAT5. The segment at 233–286 (SSQCPLETPPTQHPTPGPMGPSPPPAPAPSPLVGFSQFPQQLTPPRSPSPEPTV) is disordered. A compositionally biased stretch (pro residues) spans 239 to 262 (ETPPTQHPTPGPMGPSPPPAPAPS). The residue at position 275 (T275) is a Phosphothreonine; by CDK1. In terms of domain architecture, NR LBD spans 285 to 613 (TVEDVISQVA…KLLSFRVDAQ (329 aa)). Residue C417 coordinates heme. Position 590 is an N6-acetyllysine (K590). H601 provides a ligand contact to heme.

It belongs to the nuclear hormone receptor family. NR1 subfamily. Binds DNA as a monomer or a homodimer. Interacts with C1D, SP1 and ZNHIT1. Interacts with OPHN1 (via C-terminus). Interacts with PER2; the interaction associates PER2 to BMAL1 promoter region. Interacts with CRY1. Interacts with CCAR2. Interacts with NR2E3. Interacts with SIAH2. Interacts with FBXW7 and CDK1. Interacts with HUWE1. Interacts with NR0B2. Interacts with NFIL3. Interacts (via domain NR LBD) with HSP90AA1 and HSP90AB1. Post-translationally, ubiquitinated, leading to its proteasomal degradation. Ubiquitinated by the SCF(FBXW7) complex when phosphorylated by CDK1 leading to its proteasomal degradation. Ubiquitinated by SIAH2; leading to its proteasomal degradation. Rapidly ubiquitinated in response to inflammatory triggers and sumoylation is a prerequisite to its ubiquitination. Sumoylated by UBE2I, desumoylated by SENP1, and sumoylation is a prerequisite to its ubiquitination. In terms of processing, phosphorylated by CSNK1E; phosphorylation enhances its cytoplasmic localization. Post-translationally, undergoes lysosome-mediated degradation in a time-dependent manner in the liver. In terms of tissue distribution, expressed in all tissues and cell lines examined. Expressed at high levels in some squamous carcinoma cell lines.

It is found in the nucleus. Its subcellular location is the cytoplasm. The protein localises to the cell projection. It localises to the dendrite. The protein resides in the dendritic spine. Its function is as follows. Transcriptional repressor which coordinates circadian rhythm and metabolic pathways in a heme-dependent manner. Integral component of the complex transcription machinery that governs circadian rhythmicity and forms a critical negative limb of the circadian clock by directly repressing the expression of core clock components BMAL1, CLOCK and CRY1. Also regulates genes involved in metabolic functions, including lipid and bile acid metabolism, adipogenesis, gluconeogenesis and the macrophage inflammatory response. Acts as a receptor for heme which stimulates its interaction with the NCOR1/HDAC3 corepressor complex, enhancing transcriptional repression. Recognizes two classes of DNA response elements within the promoter of its target genes and can bind to DNA as either monomers or homodimers, depending on the nature of the response element. Binds as a monomer to a response element composed of the consensus half-site motif 5'-[A/G]GGTCA-3' preceded by an A/T-rich 5' sequence (RevRE), or as a homodimer to a direct repeat of the core motif spaced by two nucleotides (RevDR-2). Acts as a potent competitive repressor of ROR alpha (RORA) function and regulates the levels of its ligand heme by repressing the expression of PPARGC1A, a potent inducer of heme synthesis. Regulates lipid metabolism by repressing the expression of APOC3 and by influencing the activity of sterol response element binding proteins (SREBPs); represses INSIG2 which interferes with the proteolytic activation of SREBPs which in turn govern the rhythmic expression of enzymes with key functions in sterol and fatty acid synthesis. Regulates gluconeogenesis via repression of G6PC1 and PEPCK and adipocyte differentiation via repression of PPARG. Regulates glucagon release in pancreatic alpha-cells via the AMPK-NAMPT-SIRT1 pathway and the proliferation, glucose-induced insulin secretion and expression of key lipogenic genes in pancreatic-beta cells. Positively regulates bile acid synthesis by increasing hepatic expression of CYP7A1 via repression of NR0B2 and NFIL3 which are negative regulators of CYP7A1. Modulates skeletal muscle oxidative capacity by regulating mitochondrial biogenesis and autophagy; controls mitochondrial biogenesis and respiration by interfering with the STK11-PRKAA1/2-SIRT1-PPARGC1A signaling pathway. Represses the expression of SERPINE1/PAI1, an important modulator of cardiovascular disease and the expression of inflammatory cytokines and chemokines in macrophages. Represses gene expression at a distance in macrophages by inhibiting the transcription of enhancer-derived RNAs (eRNAs). Plays a role in the circadian regulation of body temperature and negatively regulates thermogenic transcriptional programs in brown adipose tissue (BAT); imposes a circadian oscillation in BAT activity, increasing body temperature when awake and depressing thermogenesis during sleep. In concert with NR2E3, regulates transcriptional networks critical for photoreceptor development and function. In addition to its activity as a repressor, can also act as a transcriptional activator. In the ovarian granulosa cells acts as a transcriptional activator of STAR which plays a role in steroid biosynthesis. In collaboration with SP1, activates GJA1 transcription in a heme-independent manner. Represses the transcription of CYP2B10, CYP4A10 and CYP4A14. Represses the transcription of CES2. Represses and regulates the circadian expression of TSHB in a NCOR1-dependent manner. Negatively regulates the protein stability of NR3C1 and influences the time-dependent subcellular distribution of NR3C1, thereby affecting its transcriptional regulatory activity. Plays a critical role in the circadian control of neutrophilic inflammation in the lung; under resting, non-stress conditions, acts as a rhythmic repressor to limit inflammatory activity whereas in the presence of inflammatory triggers undergoes ubiquitin-mediated degradation thereby relieving inhibition of the inflammatory response. Plays a key role in the circadian regulation of microglial activation and neuroinflammation; suppresses microglial activation through the NF-kappaB pathway in the central nervous system. Plays a role in the regulation of the diurnal rhythms of lipid and protein metabolism in the skeletal muscle via transcriptional repression of genes controlling lipid and amino acid metabolism in the muscle. This is Nuclear receptor subfamily 1 group D member 1 (NR1D1) from Bos taurus (Bovine).